The following is a 514-amino-acid chain: Bifunctional purine biosynthesis protein PurH (514 aa).

The region spanning 1–146 (MARLALLSVS…KNFAHLAVLC (146 aa)) is the MGS-like domain.

The protein belongs to the PurH family.

The catalysed reaction is (6R)-10-formyltetrahydrofolate + 5-amino-1-(5-phospho-beta-D-ribosyl)imidazole-4-carboxamide = 5-formamido-1-(5-phospho-D-ribosyl)imidazole-4-carboxamide + (6S)-5,6,7,8-tetrahydrofolate. The enzyme catalyses IMP + H2O = 5-formamido-1-(5-phospho-D-ribosyl)imidazole-4-carboxamide. It functions in the pathway purine metabolism; IMP biosynthesis via de novo pathway; 5-formamido-1-(5-phospho-D-ribosyl)imidazole-4-carboxamide from 5-amino-1-(5-phospho-D-ribosyl)imidazole-4-carboxamide (10-formyl THF route): step 1/1. Its pathway is purine metabolism; IMP biosynthesis via de novo pathway; IMP from 5-formamido-1-(5-phospho-D-ribosyl)imidazole-4-carboxamide: step 1/1. This Nostoc punctiforme (strain ATCC 29133 / PCC 73102) protein is Bifunctional purine biosynthesis protein PurH.